Reading from the N-terminus, the 257-residue chain is Putative pentatricopeptide repeat-containing protein At1g43010 (257 aa).

PPR repeat units lie at residues 133-168 and 169-203; these read KMRD…GFLL and KPYL…NMEV.

It belongs to the PPR family. P subfamily.

The sequence is that of Putative pentatricopeptide repeat-containing protein At1g43010 from Arabidopsis thaliana (Mouse-ear cress).